The sequence spans 295 residues: Elongation factor Ts (295 aa).

An involved in Mg(2+) ion dislocation from EF-Tu region spans residues 79 to 82; it reads TDFV.

It belongs to the EF-Ts family.

The protein resides in the cytoplasm. In terms of biological role, associates with the EF-Tu.GDP complex and induces the exchange of GDP to GTP. It remains bound to the aminoacyl-tRNA.EF-Tu.GTP complex up to the GTP hydrolysis stage on the ribosome. The sequence is that of Elongation factor Ts from Mycoplasma mycoides subsp. mycoides SC (strain CCUG 32753 / NCTC 10114 / PG1).